A 342-amino-acid polypeptide reads, in one-letter code: Tryptophan--tRNA ligase (342 aa).

ATP is bound by residues Q19–S21 and G27–N28. Positions P20–N28 match the 'HIGH' region motif. An L-tryptophan-binding site is contributed by D143. ATP-binding positions include G155–D157, V194, and K203–S207. The short motif at K203 to S207 is the 'KMSKS' region element.

The protein belongs to the class-I aminoacyl-tRNA synthetase family. As to quaternary structure, homodimer.

The protein resides in the cytoplasm. The enzyme catalyses tRNA(Trp) + L-tryptophan + ATP = L-tryptophyl-tRNA(Trp) + AMP + diphosphate + H(+). Catalyzes the attachment of tryptophan to tRNA(Trp). The sequence is that of Tryptophan--tRNA ligase from Yersinia pestis.